Consider the following 1011-residue polypeptide: Histone deacetylase 9 (1011 aa).

At Ser-22 the chain carries Phosphoserine. Residues 23 to 27 (PLDLR) form an interaction with CTBP1 region. 3 disordered regions span residues 110 to 139 (RQEQ…RAVA), 183 to 249 (TSLD…KDGN), and 262 to 304 (TESS…EQMV). Positions 136–154 (RAVASTEVKQKLQEFLLSK) are interaction with MEF2. An interaction with MAPK10 region spans residues 175–343 (LWYTAAHHTS…LPAVPSQLNA (169 aa)). Residues 185–199 (LDQSSPPLSGTSPSY) show a composition bias toward polar residues. Basic and acidic residues predominate over residues 208–219 (DAKDDFPLRKTA). An interaction with ETV6 region spans residues 218-261 (TASEPNLKVRSRLKQKVAERRSSPLLRRKDGNVVTSFKKRMFEV). Phosphoserine occurs at positions 220 and 240. The span at 233–248 (KVAERRSSPLLRRKDG) shows a compositional bias: basic and acidic residues. Low complexity predominate over residues 262-285 (TESSVSSSSPGSGPSSPNNGPTGS). At Ser-451 the chain carries Phosphoserine. The tract at residues 494–536 (QLKQPGSHLEEAEEELQGDQAMQEDRAPSSGNSTRSDSSACVD) is disordered. The span at 522–532 (SSGNSTRSDSS) shows a compositional bias: polar residues. Ser-554 carries the post-translational modification Phosphoserine. A histone deacetylase region spans residues 631–978 (SATGIAYDPL…VNALLGNELE (348 aa)). 4 residues coordinate Zn(2+): Cys-646, Cys-648, His-654, and Cys-731. Residue His-783 is part of the active site.

Belongs to the histone deacetylase family. HD type 2 subfamily. As to quaternary structure, homodimer. Interacts with CTBP1. The phosphorylated form interacts with 14-3-3. Interacts with HDAC1 and HDAC3, and probably with HDAC4 and HDAC5. Interacts with MEF2, MAPK10, ETV6, NCOR1 and BCL6. Interacts with FOXP3 in the absence of T-cell stimulation. In terms of processing, phosphorylated on Ser-220 and Ser-450; which promotes 14-3-3-binding, impairs interaction with MEF2, and antagonizes antimyogenic activity. Phosphorylated on Ser-240; which impairs nuclear accumulation. Isoform 7 is phosphorylated on Tyr-1010. Phosphorylated by the PKC kinases PKN1 and PKN2, impairing nuclear import. Post-translationally, sumoylated. In terms of tissue distribution, broadly expressed, with highest levels in brain, heart, muscle and testis. Isoform 3 is present in human bladder carcinoma cells (at protein level).

The protein localises to the nucleus. The catalysed reaction is N(6)-acetyl-L-lysyl-[histone] + H2O = L-lysyl-[histone] + acetate. Its activity is regulated as follows. Inhibited by Trichostatin A (TSA) and suberoylanilide hydroxamic acid. In terms of biological role, responsible for the deacetylation of lysine residues on the N-terminal part of the core histones (H2A, H2B, H3 and H4). Histone deacetylation gives a tag for epigenetic repression and plays an important role in transcriptional regulation, cell cycle progression and developmental events. Represses MEF2-dependent transcription. Functionally, isoform 3 lacks active site residues and therefore is catalytically inactive. Represses MEF2-dependent transcription by recruiting HDAC1 and/or HDAC3. Seems to inhibit skeletal myogenesis and to be involved in heart development. Protects neurons from apoptosis, both by inhibiting JUN phosphorylation by MAPK10 and by repressing JUN transcription via HDAC1 recruitment to JUN promoter. This is Histone deacetylase 9 (HDAC9) from Homo sapiens (Human).